The primary structure comprises 364 residues: Ribosomal RNA large subunit methyltransferase F (364 aa).

Positions 1–52 (MPKPAIKTAAKLAMSSAGKRGKPSTPKSLAKPQTTKPKTASKLKAKHGEQKR) are disordered. Residues 25-38 (TPKSLAKPQTTKPK) show a composition bias toward polar residues.

This sequence belongs to the methyltransferase superfamily. METTL16/RlmF family.

The protein localises to the cytoplasm. It carries out the reaction adenosine(1618) in 23S rRNA + S-adenosyl-L-methionine = N(6)-methyladenosine(1618) in 23S rRNA + S-adenosyl-L-homocysteine + H(+). Functionally, specifically methylates the adenine in position 1618 of 23S rRNA. In Shewanella sp. (strain ANA-3), this protein is Ribosomal RNA large subunit methyltransferase F.